Here is a 226-residue protein sequence, read N- to C-terminus: Ribosomal RNA small subunit methyltransferase G (226 aa).

S-adenosyl-L-methionine is bound by residues Gly-86, Leu-91, 137–138 (VE), and Arg-150.

Belongs to the methyltransferase superfamily. RNA methyltransferase RsmG family.

Its subcellular location is the cytoplasm. The catalysed reaction is guanosine(527) in 16S rRNA + S-adenosyl-L-methionine = N(7)-methylguanosine(527) in 16S rRNA + S-adenosyl-L-homocysteine. Functionally, specifically methylates the N7 position of guanine in position 527 of 16S rRNA. The chain is Ribosomal RNA small subunit methyltransferase G from Polaromonas sp. (strain JS666 / ATCC BAA-500).